A 142-amino-acid polypeptide reads, in one-letter code: MAAMTVQLDMVSAESNIFSGRVAQLQVSGTEGELGIMPGHAALLTSIKPGMARIVKQDGSEEVFYLSGGILEVQPSSISVLADVVLRAEEIDEQAAVEAKRRAEAHMANAGADFNYAAAAIELAQAIAQLRVVETIKKNISR.

It belongs to the ATPase epsilon chain family. As to quaternary structure, F-type ATPases have 2 components, CF(1) - the catalytic core - and CF(0) - the membrane proton channel. CF(1) has five subunits: alpha(3), beta(3), gamma(1), delta(1), epsilon(1). CF(0) has three main subunits: a, b and c.

The protein localises to the cell inner membrane. Its function is as follows. Produces ATP from ADP in the presence of a proton gradient across the membrane. This is ATP synthase epsilon chain from Shewanella halifaxensis (strain HAW-EB4).